Reading from the N-terminus, the 627-residue chain is Translation factor GUF1, mitochondrial (627 aa).

Residues 1-16 (MSLAWSAGRAWSRQSY) constitute a mitochondrion transit peptide. One can recognise a tr-type G domain in the interval 40–221 (ERYRNFCIVA…AVIERIPHPV (182 aa)). GTP is bound by residues 49 to 56 (AHIDHGKS), 114 to 118 (DTPGH), and 168 to 171 (NKID).

Belongs to the TRAFAC class translation factor GTPase superfamily. Classic translation factor GTPase family. LepA subfamily.

Its subcellular location is the mitochondrion inner membrane. The catalysed reaction is GTP + H2O = GDP + phosphate + H(+). Promotes mitochondrial protein synthesis. May act as a fidelity factor of the translation reaction, by catalyzing a one-codon backward translocation of tRNAs on improperly translocated ribosomes. Binds to mitochondrial ribosomes in a GTP-dependent manner. This is Translation factor GUF1, mitochondrial from Fusarium vanettenii (strain ATCC MYA-4622 / CBS 123669 / FGSC 9596 / NRRL 45880 / 77-13-4) (Fusarium solani subsp. pisi).